The chain runs to 152 residues: Deoxyuridine 5'-triphosphate nucleotidohydrolase (152 aa).

Residues 71 to 73 (RSG), Asn84, 88 to 90 (LID), and Met98 contribute to the substrate site.

This sequence belongs to the dUTPase family. Requires Mg(2+) as cofactor.

The enzyme catalyses dUTP + H2O = dUMP + diphosphate + H(+). Its pathway is pyrimidine metabolism; dUMP biosynthesis; dUMP from dCTP (dUTP route): step 2/2. Functionally, this enzyme is involved in nucleotide metabolism: it produces dUMP, the immediate precursor of thymidine nucleotides and it decreases the intracellular concentration of dUTP so that uracil cannot be incorporated into DNA. This chain is Deoxyuridine 5'-triphosphate nucleotidohydrolase, found in Aeromonas hydrophila subsp. hydrophila (strain ATCC 7966 / DSM 30187 / BCRC 13018 / CCUG 14551 / JCM 1027 / KCTC 2358 / NCIMB 9240 / NCTC 8049).